The primary structure comprises 254 residues: Citrate synthase-lysine N-methyltransferase CSKMT, mitochondrial (254 aa).

The N-terminal 45 residues, 1–45 (MLLNRFLVPLRSLQKLTQARRWHQTSLINDLVVNMDKKAMWDRFY), are a transit peptide targeting the mitochondrion.

This sequence belongs to the methyltransferase superfamily.

It localises to the mitochondrion. The enzyme catalyses L-lysyl-[citrate synthase] + S-adenosyl-L-methionine = N(6)-methyl-L-lysyl-[citrate synthase] + S-adenosyl-L-homocysteine + H(+). It carries out the reaction N(6)-methyl-L-lysyl-[citrate synthase] + S-adenosyl-L-methionine = N(6),N(6)-dimethyl-L-lysyl-[citrate synthase] + S-adenosyl-L-homocysteine + H(+). It catalyses the reaction N(6),N(6)-dimethyl-L-lysyl-[citrate synthase] + S-adenosyl-L-methionine = N(6),N(6),N(6)-trimethyl-L-lysyl-[citrate synthase] + S-adenosyl-L-homocysteine + H(+). With respect to regulation, citrate synthase-lysine methyltransferase activity is inhibited by S-adenosylhomocysteine (AdoHcy) and oxaloacetate (OAA). In terms of biological role, protein-lysine methyltransferase that selectively trimethylates citrate synthase (CS) in mitochondria. Seems to conduct trimethylation in a highly distributive manner rather than in a processive manner, and thus introduces a single methyl group per binding event. The chain is Citrate synthase-lysine N-methyltransferase CSKMT, mitochondrial from Danio rerio (Zebrafish).